The sequence spans 116 residues: PTS system cellobiose-specific EIIA component (116 aa).

One can recognise a PTS EIIA type-3 domain in the interval 11-109; the sequence is DDYMGVVMGI…AVEVVGQEQR (99 aa). H85 acts as the Tele-phosphohistidine intermediate in catalysis. Residue H85 is modified to Phosphohistidine; by HPr. D88 lines the Mg(2+) pocket.

In terms of assembly, homotrimer. Mg(2+) is required as a cofactor.

Its function is as follows. The phosphoenolpyruvate-dependent sugar phosphotransferase system (sugar PTS), a major carbohydrate active transport system, catalyzes the phosphorylation of incoming sugar substrates concomitantly with their translocation across the cell membrane. Involved in cellobiose transport with PtcB and CelB. This system can also transport lactose. This is PTS system cellobiose-specific EIIA component from Lactococcus lactis subsp. lactis (strain IL1403) (Streptococcus lactis).